We begin with the raw amino-acid sequence, 572 residues long: Phosphoenolpyruvate-protein phosphotransferase (572 aa).

His-191 (tele-phosphohistidine intermediate) is an active-site residue. Positions 298 and 334 each coordinate phosphoenolpyruvate. Glu-433 and Asp-457 together coordinate Mg(2+). Residues 456–457 (ND) and Arg-467 each bind phosphoenolpyruvate. The active-site Proton donor is Cys-504.

The protein belongs to the PEP-utilizing enzyme family. Homodimer. Mg(2+) is required as a cofactor.

Its subcellular location is the cytoplasm. The catalysed reaction is L-histidyl-[protein] + phosphoenolpyruvate = N(pros)-phospho-L-histidyl-[protein] + pyruvate. Functionally, general (non sugar-specific) component of the phosphoenolpyruvate-dependent sugar phosphotransferase system (sugar PTS). This major carbohydrate active-transport system catalyzes the phosphorylation of incoming sugar substrates concomitantly with their translocation across the cell membrane. Enzyme I transfers the phosphoryl group from phosphoenolpyruvate (PEP) to the phosphoryl carrier protein (HPr). In Staphylococcus aureus (strain COL), this protein is Phosphoenolpyruvate-protein phosphotransferase (ptsI).